We begin with the raw amino-acid sequence, 265 residues long: Chlorophyll a-b binding protein 1C, chloroplastic (265 aa).

The N-terminal 34 residues, 1–34, are a transit peptide targeting the chloroplast; the sequence is MAAATMALSSPSFAGQAVKLSPSASEISGNGRIT. A helical transmembrane segment spans residues 151–171; the sequence is LVHAQSILAIWACQVVLMGAV. 6 residues coordinate chlorophyll b: Val-152, Ser-156, Gln-164, Glu-172, Arg-175, and Leu-181. Lys-212, Glu-213, Asn-216, Arg-218, Gln-230, His-245, and Ala-254 together coordinate chlorophyll a. A helical transmembrane segment spans residues 219–239; sequence LAMFSMFGFFVQAIVTGKGPL. Position 261 (Phe-261) interacts with chlorophyll b.

It belongs to the light-harvesting chlorophyll a/b-binding (LHC) protein family. As to quaternary structure, the LHC complex consists of chlorophyll a-b binding proteins. It depends on Binds at least 14 chlorophylls (8 Chl-a and 6 Chl-b) and carotenoids such as lutein and neoxanthin. as a cofactor. Post-translationally, photoregulated by reversible phosphorylation of its threonine residues.

Its subcellular location is the plastid. The protein localises to the chloroplast thylakoid membrane. Functionally, the light-harvesting complex (LHC) functions as a light receptor, it captures and delivers excitation energy to photosystems with which it is closely associated. This Solanum lycopersicum (Tomato) protein is Chlorophyll a-b binding protein 1C, chloroplastic (CAB1C).